The following is a 104-amino-acid chain: DNA-binding transcriptional repressor TubR (104 aa).

2 consecutive DNA-binding regions (HTH) follow at residues 43-50 (KTAVAEMI) and 54-65 (KPTVFATVNSFY).

Homodimer. Binds to tubC DNA, the TubR-DNA complex binds to TubZ.

A DNA-binding protein that is part of the type III plasmid partition system used to ensure correct segregation of the pBtoxis plasmid. Cooperatively binds to the centromere-like site (tubC), which may seed filament formation by the TubZ polymerizing GTPase, stabilizing TubZ filaments. TubR-tubC complexes track the depolymerizing minus end of the filament, probably pulling plasmid within the cell. Required for plasmid replication. Negatively regulates levels of TubZ; its effect on RNA expression has not been shown. Specifically binds iterons, 12-bp imperfect direct repeats that function as a plasmid origin of replication. Four TubR dimers bind to tubC, forming an extended bent DNA-protein filament with protein wrapping helically around the outside of the DNA. The protein is DNA-binding transcriptional repressor TubR of Bacillus thuringiensis subsp. israelensis.